We begin with the raw amino-acid sequence, 159 residues long: Transcription elongation factor GreA (159 aa).

It belongs to the GreA/GreB family.

In terms of biological role, necessary for efficient RNA polymerase transcription elongation past template-encoded arresting sites. The arresting sites in DNA have the property of trapping a certain fraction of elongating RNA polymerases that pass through, resulting in locked ternary complexes. Cleavage of the nascent transcript by cleavage factors such as GreA or GreB allows the resumption of elongation from the new 3'terminus. GreA releases sequences of 2 to 3 nucleotides. The protein is Transcription elongation factor GreA of Buchnera aphidicola subsp. Baizongia pistaciae (strain Bp).